Here is a 508-residue protein sequence, read N- to C-terminus: Glycerol kinase (508 aa).

Thr17 contacts ADP. Residues Thr17, Thr18, and Ser19 each coordinate ATP. Position 17 (Thr17) interacts with sn-glycerol 3-phosphate. Arg21 contributes to the ADP binding site. Sn-glycerol 3-phosphate is bound by residues Arg87, Glu88, Tyr139, and Asp256. Glycerol-binding residues include Arg87, Glu88, Tyr139, Asp256, and Gln257. The ADP site is built by Thr278 and Gly322. Residues Thr278, Gly322, Gln326, and Ala423 each contribute to the ATP site. ADP is bound by residues Ala423 and Asn427.

Belongs to the FGGY kinase family.

It catalyses the reaction glycerol + ATP = sn-glycerol 3-phosphate + ADP + H(+). Its pathway is polyol metabolism; glycerol degradation via glycerol kinase pathway; sn-glycerol 3-phosphate from glycerol: step 1/1. Its activity is regulated as follows. Inhibited by fructose 1,6-bisphosphate (FBP). Its function is as follows. Key enzyme in the regulation of glycerol uptake and metabolism. Catalyzes the phosphorylation of glycerol to yield sn-glycerol 3-phosphate. The polypeptide is Glycerol kinase (Corynebacterium efficiens (strain DSM 44549 / YS-314 / AJ 12310 / JCM 11189 / NBRC 100395)).